Reading from the N-terminus, the 558-residue chain is NXPE family member 2 (558 aa).

A helical membrane pass occupies residues 17–37 (ASARKLFLIVLIIFVFWVVFM).

Belongs to the NXPE family.

The protein localises to the membrane. This Mus musculus (Mouse) protein is NXPE family member 2 (Nxpe2).